Here is a 137-residue protein sequence, read N- to C-terminus: NADH-quinone oxidoreductase subunit A (137 aa).

3 helical membrane-spanning segments follow: residues 12–32 (WGFA…LGVS), 66–86 (FYLV…LFAW), and 96–116 (TGFV…VYLF).

This sequence belongs to the complex I subunit 3 family. In terms of assembly, NDH-1 is composed of 13 different subunits. Subunits NuoA, H, J, K, L, M, N constitute the membrane sector of the complex.

It is found in the cell inner membrane. The enzyme catalyses a quinone + NADH + 5 H(+)(in) = a quinol + NAD(+) + 4 H(+)(out). In terms of biological role, NDH-1 shuttles electrons from NADH, via FMN and iron-sulfur (Fe-S) centers, to quinones in the respiratory chain. The immediate electron acceptor for the enzyme in this species is believed to be ubiquinone. Couples the redox reaction to proton translocation (for every two electrons transferred, four hydrogen ions are translocated across the cytoplasmic membrane), and thus conserves the redox energy in a proton gradient. The protein is NADH-quinone oxidoreductase subunit A of Pseudomonas fluorescens (strain Pf0-1).